Reading from the N-terminus, the 136-residue chain is Protein PsiE homolog (136 aa).

4 helical membrane passes run 15–35 (AMQTVLNLGLLCLGIILIVFL), 58–78 (VEGLVVYFLYFEFIALIVKYF), 83–103 (HFPLRYFVYIGITAIVRLIII), and 108–128 (PMAVLIYSAAILILVITLWLC).

The protein belongs to the PsiE family.

The protein resides in the cell inner membrane. The chain is Protein PsiE homolog from Klebsiella pneumoniae (strain 342).